Reading from the N-terminus, the 322-residue chain is Putative heme-binding peroxidase (322 aa).

Residue H38 is the Proton acceptor of the active site. H162 contacts heme b. W178 acts as the Tryptophan radical intermediate in catalysis. Residues 288 to 322 (ISAPKKSNHPTGPAKGAQGGCPVAASQGGCPRAKL) form a disordered region.

It belongs to the peroxidase family. Cytochrome c peroxidase subfamily. Requires heme b as cofactor.

Its function is as follows. Destroys radicals which are normally produced within the cells and which are toxic to biological systems. The protein is Putative heme-binding peroxidase of Aspergillus fumigatus (strain ATCC MYA-4609 / CBS 101355 / FGSC A1100 / Af293) (Neosartorya fumigata).